The primary structure comprises 68 residues: Large ribosomal subunit protein uL29c (68 aa).

This sequence belongs to the universal ribosomal protein uL29 family.

The protein localises to the plastid. Its subcellular location is the chloroplast. This chain is Large ribosomal subunit protein uL29c, found in Pyropia yezoensis (Susabi-nori).